Here is a 479-residue protein sequence, read N- to C-terminus: Lactaldehyde dehydrogenase (479 aa).

L150 provides a ligand contact to NAD(+). R161 contacts (S)-lactate. NAD(+) is bound by residues 176–179 (KPSE), Q214, and S230. A (S)-lactate-binding site is contributed by E251. Active-site residues include E251 and C285. N286 contributes to the (S)-lactate binding site. R336 provides a ligand contact to NAD(+). Residues E443 and H449 each coordinate (S)-lactate.

This sequence belongs to the aldehyde dehydrogenase family. As to quaternary structure, homotetramer.

It carries out the reaction (S)-lactaldehyde + NAD(+) + H2O = (S)-lactate + NADH + 2 H(+). It catalyses the reaction glycolaldehyde + NAD(+) + H2O = glycolate + NADH + 2 H(+). It participates in carbohydrate degradation; L-fucose degradation. It functions in the pathway carbohydrate degradation; L-rhamnose degradation. With respect to regulation, substrate inhibition is very strong with lactaldehyde, diminishing progressively with glycolaldehyde, glyceraldehyde or methylglyoxal. Inhibited by p-hydroxy mercuribenzoate and by some cations, including Mn(2+), Ca(2+), Cu(2+) and Zn(2+). Inhibited by NADH. Functionally, catalyzes the irreversible oxidation of L-lactaldehyde to L-lactate. Also shows high activity with glycolaldehyde and L-glyceraldehyde. Has weaker activity with various aldehydes such as methylglyoxal, propionaldehyde or benzaldehyde. Involved in the degradation of lactaldehyde produced during metabolism of L-fucose and L-rhamnose. It may be involved in several other metabolic pathways. The protein is Lactaldehyde dehydrogenase (aldA) of Escherichia coli (strain K12).